A 47-amino-acid chain; its full sequence is ATP-dependent zinc metalloprotease FTSH, chloroplastic (47 aa).

It in the N-terminal section; belongs to the AAA ATPase family. This sequence in the C-terminal section; belongs to the peptidase M41 family. Zn(2+) is required as a cofactor.

The protein localises to the plastid. Its subcellular location is the chloroplast membrane. Its function is as follows. Seems to act as an ATP-dependent zinc metallopeptidase. This Populus euphratica (Euphrates poplar) protein is ATP-dependent zinc metalloprotease FTSH, chloroplastic.